Consider the following 313-residue polypeptide: L-lactate dehydrogenase 1 (313 aa).

Val-15, Asp-36, Arg-41, and Tyr-66 together coordinate NAD(+). Residues Gln-83, Arg-89, and 121–124 contribute to the substrate site; that span reads NPVD. NAD(+)-binding positions include 119 to 121 and Ser-144; that span reads ASN. 149 to 152 serves as a coordination point for substrate; that stretch reads DTAR. Beta-D-fructose 1,6-bisphosphate contacts are provided by Arg-154 and His-169. The active-site Proton acceptor is His-176. Tyr-218 is modified (phosphotyrosine). Thr-227 contributes to the substrate binding site.

The protein belongs to the LDH/MDH superfamily. LDH family. As to quaternary structure, homotetramer.

It is found in the cytoplasm. It catalyses the reaction (S)-lactate + NAD(+) = pyruvate + NADH + H(+). Its pathway is fermentation; pyruvate fermentation to lactate; (S)-lactate from pyruvate: step 1/1. With respect to regulation, allosterically activated by fructose 1,6-bisphosphate (FBP). Its function is as follows. Catalyzes the conversion of lactate to pyruvate. This chain is L-lactate dehydrogenase 1, found in Listeria monocytogenes serotype 4b (strain F2365).